The following is a 535-amino-acid chain: CTP synthase (535 aa).

The amidoligase domain stretch occupies residues 1–266 (MKTKFIFITG…DEQVVEKLNI (266 aa)). Serine 14 contacts CTP. Serine 14 provides a ligand contact to UTP. Residues 15-20 (SIGKGL) and aspartate 72 each bind ATP. Positions 72 and 140 each coordinate Mg(2+). CTP contacts are provided by residues 147–149 (DIE), 187–192 (KTKPTQ), and lysine 223. UTP-binding positions include 187–192 (KTKPTQ) and lysine 223. In terms of domain architecture, Glutamine amidotransferase type-1 spans 292 to 534 (RIAIVGKYVN…IGASLTHRNQ (243 aa)). Residue glycine 354 participates in L-glutamine binding. Cysteine 381 acts as the Nucleophile; for glutamine hydrolysis in catalysis. L-glutamine is bound by residues 382-385 (LGMQ), glutamate 405, and arginine 462. Residues histidine 507 and glutamate 509 contribute to the active site.

This sequence belongs to the CTP synthase family. As to quaternary structure, homotetramer.

The catalysed reaction is UTP + L-glutamine + ATP + H2O = CTP + L-glutamate + ADP + phosphate + 2 H(+). The enzyme catalyses L-glutamine + H2O = L-glutamate + NH4(+). It catalyses the reaction UTP + NH4(+) + ATP = CTP + ADP + phosphate + 2 H(+). The protein operates within pyrimidine metabolism; CTP biosynthesis via de novo pathway; CTP from UDP: step 2/2. Allosterically activated by GTP, when glutamine is the substrate; GTP has no effect on the reaction when ammonia is the substrate. The allosteric effector GTP functions by stabilizing the protein conformation that binds the tetrahedral intermediate(s) formed during glutamine hydrolysis. Inhibited by the product CTP, via allosteric rather than competitive inhibition. Its function is as follows. Catalyzes the ATP-dependent amination of UTP to CTP with either L-glutamine or ammonia as the source of nitrogen. Regulates intracellular CTP levels through interactions with the four ribonucleotide triphosphates. The protein is CTP synthase of Trichlorobacter lovleyi (strain ATCC BAA-1151 / DSM 17278 / SZ) (Geobacter lovleyi).